The chain runs to 257 residues: Thiazole synthase (257 aa).

K96 (schiff-base intermediate with DXP) is an active-site residue. 1-deoxy-D-xylulose 5-phosphate-binding positions include G157, 184–185, and 206–207; these read AG and NT.

This sequence belongs to the ThiG family. Homotetramer. Forms heterodimers with either ThiH or ThiS.

The protein resides in the cytoplasm. It catalyses the reaction [ThiS sulfur-carrier protein]-C-terminal-Gly-aminoethanethioate + 2-iminoacetate + 1-deoxy-D-xylulose 5-phosphate = [ThiS sulfur-carrier protein]-C-terminal Gly-Gly + 2-[(2R,5Z)-2-carboxy-4-methylthiazol-5(2H)-ylidene]ethyl phosphate + 2 H2O + H(+). The protein operates within cofactor biosynthesis; thiamine diphosphate biosynthesis. In terms of biological role, catalyzes the rearrangement of 1-deoxy-D-xylulose 5-phosphate (DXP) to produce the thiazole phosphate moiety of thiamine. Sulfur is provided by the thiocarboxylate moiety of the carrier protein ThiS. In vitro, sulfur can be provided by H(2)S. This Rhizobium rhizogenes (strain K84 / ATCC BAA-868) (Agrobacterium radiobacter) protein is Thiazole synthase.